Consider the following 283-residue polypeptide: Probable endonuclease 4 (283 aa).

Zn(2+) is bound by residues His67, His107, Glu144, Asp178, His181, His215, Asp228, His230, and Glu260.

Belongs to the AP endonuclease 2 family. Zn(2+) serves as cofactor.

It catalyses the reaction Endonucleolytic cleavage to 5'-phosphooligonucleotide end-products.. Endonuclease IV plays a role in DNA repair. It cleaves phosphodiester bonds at apurinic or apyrimidinic (AP) sites, generating a 3'-hydroxyl group and a 5'-terminal sugar phosphate. The polypeptide is Probable endonuclease 4 (Citrifermentans bemidjiense (strain ATCC BAA-1014 / DSM 16622 / JCM 12645 / Bem) (Geobacter bemidjiensis)).